A 678-amino-acid chain; its full sequence is Glycine--tRNA ligase beta subunit (678 aa).

This sequence belongs to the class-II aminoacyl-tRNA synthetase family. Tetramer of two alpha and two beta subunits.

It localises to the cytoplasm. The enzyme catalyses tRNA(Gly) + glycine + ATP = glycyl-tRNA(Gly) + AMP + diphosphate. In Streptococcus pneumoniae serotype 19F (strain G54), this protein is Glycine--tRNA ligase beta subunit.